The following is a 141-amino-acid chain: Nucleoside diphosphate kinase (141 aa).

ATP is bound by residues Lys-11, Phe-59, Arg-87, Thr-93, Arg-104, and Asn-114. His-117 (pros-phosphohistidine intermediate) is an active-site residue.

It belongs to the NDK family. In terms of assembly, homotetramer. The cofactor is Mg(2+).

It localises to the cytoplasm. It catalyses the reaction a 2'-deoxyribonucleoside 5'-diphosphate + ATP = a 2'-deoxyribonucleoside 5'-triphosphate + ADP. The enzyme catalyses a ribonucleoside 5'-diphosphate + ATP = a ribonucleoside 5'-triphosphate + ADP. Functionally, major role in the synthesis of nucleoside triphosphates other than ATP. The ATP gamma phosphate is transferred to the NDP beta phosphate via a ping-pong mechanism, using a phosphorylated active-site intermediate. The polypeptide is Nucleoside diphosphate kinase (Cupriavidus necator (strain ATCC 17699 / DSM 428 / KCTC 22496 / NCIMB 10442 / H16 / Stanier 337) (Ralstonia eutropha)).